Here is a 154-residue protein sequence, read N- to C-terminus: Protein X (154 aa).

A mitochondrial targeting sequence region spans residues 68–117 (PCALRFTSARRMETTVNANQVLPKVLHKRTLGLSALSTTDLEAYFKDCVF).

This sequence belongs to the orthohepadnavirus protein X family. In terms of assembly, may form homodimer. May interact with host CEBPA, CFLAR, CREB1, DDB1, E4F1, HBXIP, HSPD1/HSP60, NFKBIA, POLR2E and SMAD4. Interacts with host SMC5-SMC6 complex and induces its degradation. Interacts with host TRPC4AP; leading to prevent ubiquitination of TRPC4AP. Interacts with host PLSCR1; this interaction promotes ubiquitination and degradation of HBx and impairs HBx-mediated cell proliferation. In terms of processing, a fraction may be phosphorylated in insect cells and HepG2 cells, a human hepatoblastoma cell line. Phosphorylated in vitro by host protein kinase C or mitogen-activated protein kinase. N-acetylated in insect cells.

Its subcellular location is the host cytoplasm. The protein localises to the host nucleus. The protein resides in the host mitochondrion. Its function is as follows. Multifunctional protein that plays a role in silencing host antiviral defenses and promoting viral transcription. Does not seem to be essential for HBV infection. May be directly involved in development of cirrhosis and liver cancer (hepatocellular carcinoma). Most of cytosolic activities involve modulation of cytosolic calcium. The effect on apoptosis is controversial depending on the cell types in which the studies have been conducted. May induce apoptosis by localizing in mitochondria and causing loss of mitochondrial membrane potential. May also modulate apoptosis by binding host CFLAR, a key regulator of the death-inducing signaling complex (DISC). Promotes viral transcription by using the host E3 ubiquitin ligase DDB1 to target the SMC5-SMC6 complex to proteasomal degradation. This host complex would otherwise bind to viral episomal DNA, and prevents its transcription. Moderately stimulates transcription of many different viral and cellular transcription elements. Promoters and enhancers stimulated by HBx contain DNA binding sites for NF-kappa-B, AP-1, AP-2, c-EBP, ATF/CREB, or the calcium-activated factor NF-AT. In Homo sapiens (Human), this protein is Protein X.